The chain runs to 64 residues: Disintegrin CV-11-beta (64 aa).

In terms of domain architecture, Disintegrin spans 1–64; the sequence is NSAHPCCDPV…SDCPRNPWKD (64 aa). 4 disulfides stabilise this stretch: C6–C29, C20–C26, C25–C50, and C38–C57. The short motif at 42 to 44 is the Cell attachment site element; it reads RGD.

The protein belongs to the disintegrin family. Dimeric disintegrin subfamily. Heterodimer with subunit alpha; disulfide-linked. In terms of tissue distribution, expressed by the venom gland.

It localises to the secreted. In terms of biological role, inhibits ADP-induced human platelet aggregation. Antagonist of alpha-IIb/beta-3 (ITGA2B/ITGB3). The protein is Disintegrin CV-11-beta of Cerastes vipera (Sahara sand viper).